We begin with the raw amino-acid sequence, 285 residues long: Inositol oxygenase (285 aa).

Arginine 29 provides a ligand contact to substrate. Serine 33 is subject to Phosphoserine. A substrate-binding site is contributed by aspartate 85 to serine 87. Residues histidine 98, histidine 123, and aspartate 124 each contribute to the Fe cation site. Residues lysine 127 and glycine 141–aspartate 142 each bind substrate. Fe cation contacts are provided by histidine 194, histidine 220, and aspartate 253. Histidine 220–serine 221 is a binding site for substrate.

It belongs to the myo-inositol oxygenase family. The cofactor is Fe cation. Kidney specific.

It is found in the cytoplasm. It catalyses the reaction myo-inositol + O2 = D-glucuronate + H2O + H(+). The protein operates within polyol metabolism; myo-inositol degradation into D-glucuronate; D-glucuronate from myo-inositol: step 1/1. In Rattus norvegicus (Rat), this protein is Inositol oxygenase (Miox).